Here is a 466-residue protein sequence, read N- to C-terminus: Ankyrin repeat and SOCS box protein 18 (466 aa).

ANK repeat units follow at residues 119–148 (ELTT…DPDA), 151–180 (GGRG…DPDL), 184–213 (EGLA…SVQR), 218–247 (GRDT…HVDA), 251–288 (RGET…EADA), and 292–321 (DERS…DAGA). Residues 405-463 (QMHKPFYQSLFALALTPRCLQHLCRCALRRLFGKRCFDLIPLLPLPKPLQNYLLLEPQG) enclose the SOCS box domain.

Belongs to the ankyrin SOCS box (ASB) family.

It participates in protein modification; protein ubiquitination. In terms of biological role, may be a substrate-recognition component of a SCF-like ECS (Elongin-Cullin-SOCS-box protein) E3 ubiquitin-protein ligase complex which mediates the ubiquitination and subsequent proteasomal degradation of target proteins. This chain is Ankyrin repeat and SOCS box protein 18 (ASB18), found in Homo sapiens (Human).